The following is a 339-amino-acid chain: Phenylalanine--tRNA ligase alpha subunit (339 aa).

Glutamate 254 is a binding site for Mg(2+).

This sequence belongs to the class-II aminoacyl-tRNA synthetase family. Phe-tRNA synthetase alpha subunit type 1 subfamily. Tetramer of two alpha and two beta subunits. Requires Mg(2+) as cofactor.

The protein resides in the cytoplasm. It carries out the reaction tRNA(Phe) + L-phenylalanine + ATP = L-phenylalanyl-tRNA(Phe) + AMP + diphosphate + H(+). This Caldanaerobacter subterraneus subsp. tengcongensis (strain DSM 15242 / JCM 11007 / NBRC 100824 / MB4) (Thermoanaerobacter tengcongensis) protein is Phenylalanine--tRNA ligase alpha subunit.